A 66-amino-acid chain; its full sequence is MDFTTLVIIGVYLLVFIVYFAKINTSMCTISISGASVEISGCDNPALFEILPNLKPFDHGLSVPSI.

Over 1 to 2 (MD) the chain is Lumenal. Residues 3–23 (FTTLVIIGVYLLVFIVYFAKI) traverse the membrane as a helical segment. The Cytoplasmic segment spans residues 24–66 (NTSMCTISISGASVEISGCDNPALFEILPNLKPFDHGLSVPSI).

This sequence belongs to the Tymovirales TGBp3 protein family.

Its subcellular location is the host endoplasmic reticulum membrane. In terms of biological role, plays a role in viral cell-to-cell propagation, by facilitating genome transport to neighboring plant cells through plasmosdesmata. May induce the formation of granular vesicles derived from the Endoplasmic reticulum, which align on actin filaments. The chain is Movement protein TGBp3 from Trifolium (WCMV).